Consider the following 157-residue polypeptide: Protein Smg (157 aa).

Belongs to the Smg family.

The protein is Protein Smg of Buchnera aphidicola subsp. Acyrthosiphon pisum (strain 5A).